The sequence spans 518 residues: Glutamate--cysteine ligase (518 aa).

Belongs to the glutamate--cysteine ligase type 1 family. Type 1 subfamily.

It carries out the reaction L-cysteine + L-glutamate + ATP = gamma-L-glutamyl-L-cysteine + ADP + phosphate + H(+). The protein operates within sulfur metabolism; glutathione biosynthesis; glutathione from L-cysteine and L-glutamate: step 1/2. The chain is Glutamate--cysteine ligase from Salmonella gallinarum (strain 287/91 / NCTC 13346).